The following is a 420-amino-acid chain: Histidine--tRNA ligase (420 aa).

It belongs to the class-II aminoacyl-tRNA synthetase family. Homodimer.

The protein resides in the cytoplasm. The catalysed reaction is tRNA(His) + L-histidine + ATP = L-histidyl-tRNA(His) + AMP + diphosphate + H(+). This chain is Histidine--tRNA ligase, found in Streptomyces avermitilis (strain ATCC 31267 / DSM 46492 / JCM 5070 / NBRC 14893 / NCIMB 12804 / NRRL 8165 / MA-4680).